A 55-amino-acid chain; its full sequence is Large ribosomal subunit protein bL33 (55 aa).

Belongs to the bacterial ribosomal protein bL33 family.

The polypeptide is Large ribosomal subunit protein bL33 (Buchnera aphidicola subsp. Acyrthosiphon pisum (strain 5A)).